The chain runs to 82 residues: Cytochrome b559 subunit alpha (82 aa).

The chain crosses the membrane as a helical span at residues isoleucine 22–phenylalanine 36. Heme is bound at residue histidine 24.

Belongs to the PsbE/PsbF family. Heterodimer of an alpha subunit and a beta subunit. PSII is composed of 1 copy each of membrane proteins PsbA, PsbB, PsbC, PsbD, PsbE, PsbF, PsbH, PsbI, PsbJ, PsbK, PsbL, PsbM, PsbT, PsbX, PsbY, Psb30/Ycf12, peripheral proteins PsbO, CyanoQ (PsbQ), PsbU, PsbV and a large number of cofactors. It forms dimeric complexes. It depends on heme b as a cofactor.

The protein resides in the cellular thylakoid membrane. Its function is as follows. This b-type cytochrome is tightly associated with the reaction center of photosystem II (PSII). PSII is a light-driven water:plastoquinone oxidoreductase that uses light energy to abstract electrons from H(2)O, generating O(2) and a proton gradient subsequently used for ATP formation. It consists of a core antenna complex that captures photons, and an electron transfer chain that converts photonic excitation into a charge separation. The chain is Cytochrome b559 subunit alpha from Prochlorococcus marinus (strain SARG / CCMP1375 / SS120).